The primary structure comprises 196 residues: NADPH:quinone oxidoreductase (196 aa).

It belongs to the SsuE family. Homotetramer. It depends on FMN as a cofactor.

The protein resides in the cell membrane. The catalysed reaction is a quinone + NADH + H(+) = a quinol + NAD(+). It carries out the reaction a quinone + NADPH + H(+) = a quinol + NADP(+). Its function is as follows. The enzyme apparently serves as a quinone reductase in connection with conjugation reactions of hydroquinones involved in detoxification pathways. This chain is NADPH:quinone oxidoreductase (NQR), found in Arabidopsis thaliana (Mouse-ear cress).